Consider the following 227-residue polypeptide: Pro-thyrotropin-releasing hormone-A (227 aa).

A signal peptide spans 1-15 (MVSVWWLLLLGTTVS). A Pyrrolidone carboxylic acid modification is found at Gln75. Position 77 is a proline amide (Pro77). Gln89 is subject to Pyrrolidone carboxylic acid. Pro91 carries the proline amide modification. A Pyrrolidone carboxylic acid modification is found at Gln107. Disordered stretches follow at residues 107 to 128 (QHPG…KREE) and 151 to 204 (RRQH…PCEG). Pro109 bears the Proline amide mark. Basic and acidic residues predominate over residues 112–128 (RFVDDVEKRQHPGKREE). Position 121 is a pyrrolidone carboxylic acid (Gln121). A Proline amide modification is found at Pro123. Gln153 is subject to Pyrrolidone carboxylic acid. Residue Pro155 is modified to Proline amide. The residue at position 168 (Gln168) is a Pyrrolidone carboxylic acid. At Pro170 the chain carries Proline amide. Residues 184–201 (ENSKEVGKRQHPGKRYDP) show a composition bias toward basic and acidic residues. Pyrrolidone carboxylic acid is present on Gln193. Pro195 carries the proline amide modification.

The protein belongs to the TRH family.

The protein resides in the secreted. In Xenopus laevis (African clawed frog), this protein is Pro-thyrotropin-releasing hormone-A (trh-a).